The sequence spans 84 residues: Phosphoribosylformylglycinamidine synthase subunit PurS (84 aa).

The protein belongs to the PurS family. In terms of assembly, homodimer or homotetramer. Part of the FGAM synthase complex composed of 1 PurL, 1 PurQ and 2 PurS subunits.

The protein localises to the cytoplasm. It carries out the reaction N(2)-formyl-N(1)-(5-phospho-beta-D-ribosyl)glycinamide + L-glutamine + ATP + H2O = 2-formamido-N(1)-(5-O-phospho-beta-D-ribosyl)acetamidine + L-glutamate + ADP + phosphate + H(+). It participates in purine metabolism; IMP biosynthesis via de novo pathway; 5-amino-1-(5-phospho-D-ribosyl)imidazole from N(2)-formyl-N(1)-(5-phospho-D-ribosyl)glycinamide: step 1/2. Functionally, part of the phosphoribosylformylglycinamidine synthase complex involved in the purines biosynthetic pathway. Catalyzes the ATP-dependent conversion of formylglycinamide ribonucleotide (FGAR) and glutamine to yield formylglycinamidine ribonucleotide (FGAM) and glutamate. The FGAM synthase complex is composed of three subunits. PurQ produces an ammonia molecule by converting glutamine to glutamate. PurL transfers the ammonia molecule to FGAR to form FGAM in an ATP-dependent manner. PurS interacts with PurQ and PurL and is thought to assist in the transfer of the ammonia molecule from PurQ to PurL. The polypeptide is Phosphoribosylformylglycinamidine synthase subunit PurS (Bacillus subtilis (strain 168)).